The chain runs to 286 residues: Undecaprenyl-diphosphatase (286 aa).

7 helical membrane-spanning segments follow: residues 43–63, 91–111, 118–138, 150–170, 189–209, 236–256, and 264–284; these read FWKM…PIYF, LTII…KIIG, IIMG…DVMF, MSVG…VFPG, AAAL…ATCY, ITLA…VAWF, and GFVP…AWAL.

The protein belongs to the UppP family.

Its subcellular location is the cell inner membrane. It catalyses the reaction di-trans,octa-cis-undecaprenyl diphosphate + H2O = di-trans,octa-cis-undecaprenyl phosphate + phosphate + H(+). In terms of biological role, catalyzes the dephosphorylation of undecaprenyl diphosphate (UPP). Confers resistance to bacitracin. This Koribacter versatilis (strain Ellin345) protein is Undecaprenyl-diphosphatase.